Here is a 304-residue protein sequence, read N- to C-terminus: Recombination-associated protein RdgC (304 aa).

Belongs to the RdgC family.

The protein localises to the cytoplasm. The protein resides in the nucleoid. Its function is as follows. May be involved in recombination. The protein is Recombination-associated protein RdgC of Shewanella baltica (strain OS185).